The chain runs to 504 residues: Probable cytochrome P450 513F1 (504 aa).

A helical transmembrane segment spans residues 1–21 (MILSLLFLFVITLYFLIPSRI). A heme-binding site is contributed by Cys-449.

It belongs to the cytochrome P450 family. The cofactor is heme.

The protein resides in the membrane. This is Probable cytochrome P450 513F1 (cyp513F1) from Dictyostelium discoideum (Social amoeba).